A 74-amino-acid polypeptide reads, in one-letter code: Translation initiation factor IF-1 (74 aa).

An S1-like domain is found at 1–72 (MAKQDAIEME…TKGRITYRLR (72 aa)).

It belongs to the IF-1 family. In terms of assembly, component of the 30S ribosomal translation pre-initiation complex which assembles on the 30S ribosome in the order IF-2 and IF-3, IF-1 and N-formylmethionyl-tRNA(fMet); mRNA recruitment can occur at any time during PIC assembly.

The protein localises to the cytoplasm. Functionally, one of the essential components for the initiation of protein synthesis. Stabilizes the binding of IF-2 and IF-3 on the 30S subunit to which N-formylmethionyl-tRNA(fMet) subsequently binds. Helps modulate mRNA selection, yielding the 30S pre-initiation complex (PIC). Upon addition of the 50S ribosomal subunit IF-1, IF-2 and IF-3 are released leaving the mature 70S translation initiation complex. The protein is Translation initiation factor IF-1 of Acaryochloris marina (strain MBIC 11017).